Here is a 1333-residue protein sequence, read N- to C-terminus: snRNA-activating protein complex subunit 4 (1333 aa).

The interval 29–84 is disordered; sequence HFEVSESSLSSDSEADSLPDEDLETAGAPILEEEGSSESSNDEEDPKDKALPEDPE. 2 stretches are compositionally biased toward acidic residues: residues 41–52 and 59–73; these read SEADSLPDEDLE and LEEE…DEED. Serine 68 carries the phosphoserine modification. The segment at 84–133 is SNAPC5-binding; it reads ETCLQLNMVYQEVIREKLAEVSQLLAQNQEQQEEILFDLSGTKCPKVKDG. In terms of domain architecture, Myb-like 1 spans 250 to 288; it reads EEALLGNRLDSHDWEKISNINFEGARSAEEIRKFWQSSE. An HTH myb-type 1 domain is found at 289-343; that stretch reads HPSISKQEWSTEEVERLKAIAATHGHLEWHLVAEELGTSRSAFQCLQKFQQYNKT. Positions 317–341 form a DNA-binding region, H-T-H motif; it reads WHLVAEELGTSRSAFQCLQKFQQYN. In terms of domain architecture, Myb-like 2 spans 344 to 395; the sequence is LKRKEWTEEEDHMLTQLVQEMRVGNHIPYRKIVYFMEGRDSMQLIYRWTKSL. 2 consecutive HTH myb-type domains span residues 396 to 451 and 452 to 503; these read DPSL…HFSL and KKGR…RKKQ. 2 DNA-binding regions (H-T-H motif) span residues 424–447 and 476–499; these read WFKI…IRRL and WARI…KILA. The segment covering 503-515 has biased composition (basic residues); sequence QHLQRKRGQRPRH. 4 disordered regions span residues 503 to 558, 662 to 702, 811 to 842, and 1079 to 1117; these read QHLQ…LEKS, LMKE…QNKQ, NAKN…LGSC, and LPSP…PEKA. Over residues 516–546 the composition is skewed to low complexity; the sequence is SSQWSSSGSSSSSSEDYGSSSGSDGSSGSEN. Composition is skewed to polar residues over residues 672–686 and 811–826; these read LPSS…NNTA and NAKN…TGEQ. An SNAPC2-binding region spans residues 1131–1247; it reads AIVTWLKGCQ…NSIPTTLSPD (117 aa). Residues serine 1252, serine 1254, serine 1301, and serine 1309 each carry the phosphoserine modification. The disordered stretch occupies residues 1282–1333; that stretch reads PAAPDPVQSHLVSPGQRAPSPGEVSAPSPLDASDGLDDLNVLRTRRARHSRR. Residues 1324–1333 show a composition bias toward basic residues; sequence RTRRARHSRR.

In terms of assembly, part of the SNAPc composed of 5 subunits: SNAPC1, SNAPC2, SNAPC3, SNAPC4 and SNAPC5. SNAPC4 interacts with SNAPC1, SNAPC2, SNAPC5, BRF2 and TBP.

Its subcellular location is the nucleus. Part of the SNAPc complex required for the transcription of both RNA polymerase II and III small-nuclear RNA genes. Binds to the proximal sequence element (PSE), a non-TATA-box basal promoter element common to these 2 types of genes. Recruits TBP and BRF2 to the U6 snRNA TATA box. The protein is snRNA-activating protein complex subunit 4 of Mus musculus (Mouse).